Consider the following 411-residue polypeptide: Bifunctional protein GlmU (411 aa).

A pyrophosphorylase region spans residues 1–204; sequence MDAVILCAGK…ENNIKGIKLN (204 aa). UTP contacts are provided by residues 6-9, Gln-74, and Gly-79; that span reads LCAG. Thr-80, Gly-132, Glu-144, and Asn-158 together coordinate N-acetyl-alpha-D-glucosamine 1-phosphate. Residues 205-224 form a linker region; that stretch reads GYWNDIGKPWDLLDANTHIL. Positions 225–411 are N-acetyltransferase; sequence KNIKTDIKGK…EEIIIKTKRK (187 aa). The Proton acceptor role is filled by His-308. Residues Ala-384 and Lys-401 each contribute to the acetyl-CoA site.

This sequence in the N-terminal section; belongs to the N-acetylglucosamine-1-phosphate uridyltransferase family. The protein in the C-terminal section; belongs to the transferase hexapeptide repeat family.

The catalysed reaction is N-acetyl-alpha-D-glucosamine 1-phosphate + UTP + H(+) = UDP-N-acetyl-alpha-D-glucosamine + diphosphate. It carries out the reaction alpha-D-glucosamine 1-phosphate + acetyl-CoA = N-acetyl-alpha-D-glucosamine 1-phosphate + CoA + H(+). Its pathway is nucleotide-sugar biosynthesis; UDP-N-acetyl-alpha-D-glucosamine biosynthesis; N-acetyl-alpha-D-glucosamine 1-phosphate from alpha-D-glucosamine 6-phosphate (route II): step 2/2. It functions in the pathway nucleotide-sugar biosynthesis; UDP-N-acetyl-alpha-D-glucosamine biosynthesis; UDP-N-acetyl-alpha-D-glucosamine from N-acetyl-alpha-D-glucosamine 1-phosphate: step 1/1. In terms of biological role, catalyzes the last two sequential reactions in the de novo biosynthetic pathway for UDP-N-acetyl-glucosamine (UDP-GlcNAc). Responsible for the acetylation of GlcN-1-P to GlcNAc-1-P, and for the uridyl transfer from UTP to GlcNAc-1-P, to produce UDP-GlcNAc and pyrophosphate. The protein is Bifunctional protein GlmU of Methanococcus aeolicus (strain ATCC BAA-1280 / DSM 17508 / OCM 812 / Nankai-3).